The sequence spans 406 residues: Multidrug resistance protein MdtG (406 aa).

A run of 11 helical transmembrane segments spans residues 16–36 (VAWL…PFLP), 56–76 (LVFS…GGLA), 90–110 (LGMA…QFLL), 113–133 (ALLG…ATQV), 144–164 (TLST…GLLA), 171–191 (PVFF…LFFT), 222–242 (LFVT…ILTL), 254–274 (IAFI…LSAP), 288–308 (ILIT…FVQT), 317–337 (FLLG…LVYN), and 376–396 (AVFC…WNSL).

It belongs to the major facilitator superfamily. DHA1 family. MdtG (TC 2.A.1.2.20) subfamily.

It localises to the cell inner membrane. This Citrobacter koseri (strain ATCC BAA-895 / CDC 4225-83 / SGSC4696) protein is Multidrug resistance protein MdtG.